The following is a 287-amino-acid chain: uncharacterized protein (287 aa).

A disordered region spans residues 1-44; sequence MAAPRNLTGDGGARQLVKDEESPAASSAAKGLLNDDSPTGKRTK. S37 carries the post-translational modification Phosphoserine. 5 helical membrane passes run 55 to 75, 124 to 144, 147 to 167, 218 to 238, and 260 to 280; these read FAVF…IYLT, TFMI…FGVV, FVLV…LSKL, PIVD…LMPA, and DFKT…PALL.

The protein resides in the membrane. This is an uncharacterized protein from Arabidopsis thaliana (Mouse-ear cress).